A 424-amino-acid polypeptide reads, in one-letter code: 3-isopropylmalate dehydratase large subunit 2 (424 aa).

Positions 299, 359, and 362 each coordinate [4Fe-4S] cluster.

It belongs to the aconitase/IPM isomerase family. LeuC type 2 subfamily. Heterodimer of LeuC and LeuD. [4Fe-4S] cluster is required as a cofactor.

The enzyme catalyses (2R,3S)-3-isopropylmalate = (2S)-2-isopropylmalate. It participates in amino-acid biosynthesis; L-leucine biosynthesis; L-leucine from 3-methyl-2-oxobutanoate: step 2/4. Functionally, catalyzes the isomerization between 2-isopropylmalate and 3-isopropylmalate, via the formation of 2-isopropylmaleate. In Rubrobacter xylanophilus (strain DSM 9941 / JCM 11954 / NBRC 16129 / PRD-1), this protein is 3-isopropylmalate dehydratase large subunit 2.